The sequence spans 751 residues: Ecdysteroid-phosphate phosphatase (751 aa).

The UBA domain maps to 16–60 (CISKQHLTPLQTLLQMGFPRHRAEKALASTGNRGVQIASDWLLAH). The 66-residue stretch at 271-336 (ATKQVQKVVY…PVNYTERTAE (66 aa)) folds into the SH3 domain. 2 disordered regions span residues 367 to 394 (GRSI…FEES) and 458 to 484 (EPPA…PGSL). Over residues 466–479 (RPDDTLSVHSDHSL) the composition is skewed to basic and acidic residues. Residues 490–751 (KNRKIYIMRH…RFEWNALSAT (262 aa)) are phosphatase-like. The active site involves Arg498. The active-site Tele-phosphohistidine intermediate is the His499. Residue His681 is part of the active site.

The protein resides in the cytoplasm. It localises to the cytosol. Its subcellular location is the nucleus. The catalysed reaction is ecdysone 22-phosphate + H2O = ecdysone + phosphate. It carries out the reaction 20-hydroxyecdysone 22-phosphate + H2O = 20-hydroxyecdysone + phosphate. It catalyses the reaction 2-deoxyecdysone 22-phosphate + H2O = 2-deoxyecdysone + phosphate. Steroid phosphatase that dephosphorylates ecdysteroids such as ecdysone 22-phosphate (E22P), 3-epi-ecdysone 22-phosphate (E22P) and 3-epi-ecdysone 2-phosphate (E2P). Likely catalyzes the conversion of inactive phosphorylated ecdysteroids into their active forms. Shows high activity towards ecdysone 22-phosphate (E22P), but is also significantly active against 3-epi-ecdysone 22-phosphate (E22P) and 3-epi-ecdysone 2-phosphate (E2P). Also displays acid phosphatase activity towards 4-nitrophenyl phosphate (pNNP) in vitro. Has no activity towards 3-epi-ecdysone 3-phosphate (E3P). This is Ecdysteroid-phosphate phosphatase from Drosophila melanogaster (Fruit fly).